Here is a 367-residue protein sequence, read N- to C-terminus: Deoxyhypusine synthase-like protein (367 aa).

The tract at residues 1-23 is disordered; that stretch reads MKSLFQRRASKVRETEAMNAPVP.

The protein belongs to the deoxyhypusine synthase family.

This Caulobacter vibrioides (strain ATCC 19089 / CIP 103742 / CB 15) (Caulobacter crescentus) protein is Deoxyhypusine synthase-like protein.